A 483-amino-acid polypeptide reads, in one-letter code: Matrix metalloproteinase-20 (483 aa).

A signal peptide spans methionine 1–alanine 22. Residues alanine 23–asparagine 107 constitute a propeptide, activation peptide. A Cysteine switch motif is present at residues proline 98–valine 105. Cysteine 100 contributes to the Zn(2+) binding site. Glutamate 164, alanine 165, and aspartate 166 together coordinate Ca(2+). Histidine 176 and aspartate 178 together coordinate Zn(2+). Positions 183, 184, 186, and 188 each coordinate Ca(2+). Histidine 191 serves as a coordination point for Zn(2+). Ca(2+) is bound by residues glutamate 197, glycine 198, glycine 200, and aspartate 202. Histidine 204 contributes to the Zn(2+) binding site. Positions 206 and 209 each coordinate Ca(2+). Histidine 226 is a binding site for Zn(2+). Glutamate 227 is an active-site residue. 2 residues coordinate Zn(2+): histidine 230 and histidine 236. Hemopexin repeat units follow at residues proline 293 to leucine 343, methionine 344 to arginine 389, valine 391 to valine 439, and asparagine 440 to cysteine 483. The cysteines at positions 296 and 483 are disulfide-linked.

It belongs to the peptidase M10A family. Requires Zn(2+) as cofactor. Ca(2+) serves as cofactor. Autoactivates at least at the 107-Asn-|-Tyr-108 site. As to expression, expressed specifically in the enamel organ.

The protein resides in the secreted. The protein localises to the extracellular space. It localises to the extracellular matrix. Its function is as follows. Degrades amelogenin, the major protein component of the enamel matrix and two of the macromolecules characterizing the cartilage extracellular matrix: aggrecan and the cartilage oligomeric matrix protein (COMP). May play a central role in tooth enamel formation. This Sus scrofa (Pig) protein is Matrix metalloproteinase-20 (MMP20).